The chain runs to 307 residues: Protein ORANGE, chloroplastic (307 aa).

Residues 1–55 (MSSLGRILSVSYPPDPYTWRFSQYKLSSSLGRNRRLRWRFTALDPESSSLDSESS) constitute a chloroplast transit peptide. A Glycyl lysine isopeptide (Lys-Gly) (interchain with G-Cter in ubiquitin) cross-link involves residue Lys-58. 2 helical membrane passes run 146-166 (VYYA…GLLA) and 199-219 (IVAS…VVEV). The CR-type-like stretch occupies residues 208–299 (VGVISALMVV…CTGMAMASEH (92 aa)). Residues 230–237 (CKYCLGTG) form a CXXCXGXG motif repeat. One copy of the CXXCXXXG motif repeat lies at 241-248 (CARCSSTG). A CXXCXGXG motif repeat occupies 274-281 (CSNCSGAG). The CXXCXXXG motif repeat unit spans residues 285–292 (CPTCLCTG).

The protein belongs to the orange-like family. As to quaternary structure, interacts with the phytoene synthase PSY1 in chloroplast. Binds to the eukaryotic release factor eRF1-2. Interacts with the transcription factor TCP14 in the nucleus to repress chloroplast biogenesis in etiolated seedlings. Associates to the E2 ubiquitin-conjugating enzyme UBC19. Ubiquitination at K-58 by UBC19 is essential for nuclear localization.

The protein localises to the plastid. Its subcellular location is the chloroplast membrane. It is found in the nucleus. It localises to the cytoplasm. In terms of biological role, involved in chromoplast differentiation. Associated with a cellular process that triggers the differentiation of pro-plastids or other non-colored plastids into chromoplasts for carotenoid accumulation. Is associated with carotenoid accumulation in chromoplasts. Functions as a major regulator of the phytoene synthase PSY1 protein level and activity. Modulates carotenoid biosynthesis by means of post-transcriptional regulation of PSY1. Modulates carotenoid biosynthesis in part by up-regulating a series of endogenous carotenogenic genes. Regulates cell elongation in the petiole in an eRF1-2-dependent manner. Binds to and represses TCP14 transactivation activity, thus preventing early light-induced proteins (ELIPs, e.g. ELIP1 and ELIP2) expression and delaying chloroplast biogenesis (e.g. lower chlorophyll biosynthesis and slower development of thylakoid membranes) in germinating cotyledons and etiolated seedlings; reduced levels upon illumination combined to TCP14 accumulation derepress chloroplast biogenesis during deetiolation. This chain is Protein ORANGE, chloroplastic, found in Arabidopsis thaliana (Mouse-ear cress).